The primary structure comprises 276 residues: Putative translation initiation factor eIF-2B subunit 2-like (276 aa).

Belongs to the eIF-2B alpha/beta/delta subunits family. In terms of assembly, complex of two different subunits.

In terms of biological role, catalyzes the exchange of initiation factor 2-bound GDP for GTP. The chain is Putative translation initiation factor eIF-2B subunit 2-like from Pyrococcus horikoshii (strain ATCC 700860 / DSM 12428 / JCM 9974 / NBRC 100139 / OT-3).